The sequence spans 164 residues: NADH-quinone oxidoreductase subunit I (164 aa).

4Fe-4S ferredoxin-type domains lie at 56–85 and 95–124; these read RRYESGEERCIACKLCEAICPAQAITIEAE and TRYDIDMTKCIYCGFCQEACPVDAIVEGPN. [4Fe-4S] cluster-binding residues include Cys65, Cys68, Cys71, Cys75, Cys104, Cys107, Cys110, and Cys114.

The protein belongs to the complex I 23 kDa subunit family. As to quaternary structure, NDH-1 is composed of 14 different subunits. Subunits NuoA, H, J, K, L, M, N constitute the membrane sector of the complex. The cofactor is [4Fe-4S] cluster.

The protein localises to the cell inner membrane. It carries out the reaction a quinone + NADH + 5 H(+)(in) = a quinol + NAD(+) + 4 H(+)(out). NDH-1 shuttles electrons from NADH, via FMN and iron-sulfur (Fe-S) centers, to quinones in the respiratory chain. The immediate electron acceptor for the enzyme in this species is believed to be ubiquinone. Couples the redox reaction to proton translocation (for every two electrons transferred, four hydrogen ions are translocated across the cytoplasmic membrane), and thus conserves the redox energy in a proton gradient. The polypeptide is NADH-quinone oxidoreductase subunit I (Anaplasma phagocytophilum (strain HZ)).